A 382-amino-acid chain; its full sequence is 1-deoxy-D-xylulose 5-phosphate reductoisomerase (382 aa).

The NADPH site is built by T10, G11, S12, I13, G36, and N122. K123 lines the 1-deoxy-D-xylulose 5-phosphate pocket. E124 contacts NADPH. D148 is a Mn(2+) binding site. 1-deoxy-D-xylulose 5-phosphate is bound by residues S149, E150, S174, and H197. A Mn(2+)-binding site is contributed by E150. NADPH is bound at residue G203. 1-deoxy-D-xylulose 5-phosphate-binding residues include S210, N215, K216, and E219. Residue E219 participates in Mn(2+) binding.

Belongs to the DXR family. Requires Mg(2+) as cofactor. The cofactor is Mn(2+).

It catalyses the reaction 2-C-methyl-D-erythritol 4-phosphate + NADP(+) = 1-deoxy-D-xylulose 5-phosphate + NADPH + H(+). The protein operates within isoprenoid biosynthesis; isopentenyl diphosphate biosynthesis via DXP pathway; isopentenyl diphosphate from 1-deoxy-D-xylulose 5-phosphate: step 1/6. In terms of biological role, catalyzes the NADPH-dependent rearrangement and reduction of 1-deoxy-D-xylulose-5-phosphate (DXP) to 2-C-methyl-D-erythritol 4-phosphate (MEP). This is 1-deoxy-D-xylulose 5-phosphate reductoisomerase from Chlorobium chlorochromatii (strain CaD3).